The primary structure comprises 1070 residues: DNA-directed RNA polymerase subunit beta (1070 aa).

Belongs to the RNA polymerase beta chain family. In terms of assembly, in plastids the minimal PEP RNA polymerase catalytic core is composed of four subunits: alpha, beta, beta', and beta''. When a (nuclear-encoded) sigma factor is associated with the core the holoenzyme is formed, which can initiate transcription.

It localises to the plastid. Its subcellular location is the chloroplast. The catalysed reaction is RNA(n) + a ribonucleoside 5'-triphosphate = RNA(n+1) + diphosphate. Its function is as follows. DNA-dependent RNA polymerase catalyzes the transcription of DNA into RNA using the four ribonucleoside triphosphates as substrates. This chain is DNA-directed RNA polymerase subunit beta, found in Populus alba (White poplar).